A 126-amino-acid chain; its full sequence is Small ribosomal subunit protein bS6 (126 aa).

The tract at residues 103–126 (LKAKDERKAPEALVEEVEAEDADE) is disordered. Residues 115–126 (LVEEVEAEDADE) show a composition bias toward acidic residues.

This sequence belongs to the bacterial ribosomal protein bS6 family.

Functionally, binds together with bS18 to 16S ribosomal RNA. The chain is Small ribosomal subunit protein bS6 from Glaesserella parasuis serovar 5 (strain SH0165) (Haemophilus parasuis).